Consider the following 313-residue polypeptide: Ribosomal RNA small subunit methyltransferase H (313 aa).

Residues 35 to 37 (GGH), aspartate 55, phenylalanine 79, aspartate 101, and glutamine 108 contribute to the S-adenosyl-L-methionine site.

It belongs to the methyltransferase superfamily. RsmH family.

It localises to the cytoplasm. The enzyme catalyses cytidine(1402) in 16S rRNA + S-adenosyl-L-methionine = N(4)-methylcytidine(1402) in 16S rRNA + S-adenosyl-L-homocysteine + H(+). Functionally, specifically methylates the N4 position of cytidine in position 1402 (C1402) of 16S rRNA. This Shigella flexneri serotype 5b (strain 8401) protein is Ribosomal RNA small subunit methyltransferase H.